A 25-amino-acid polypeptide reads, in one-letter code: U11-ctenitoxin-Co1b (25 aa).

Disulfide bonds link Cys-4–Cys-18 and Cys-11–Cys-22.

As to quaternary structure, monomer. Expressed by the venom gland.

It localises to the secreted. Its function is as follows. Neurotoxin. The chain is U11-ctenitoxin-Co1b from Ctenus ornatus (Brazilian spider).